The sequence spans 385 residues: Selenoprotein P (385 aa).

Residues 1-19 (MWRSLGLALALCLLPYGGA) form the signal peptide. Residue U59 is a non-standard amino acid, selenocysteine. Residues 59-62 (UYLC) constitute a cross-link (cysteinyl-selenocysteine (Sec-Cys); in isoform Se-P1). N83, N174, and N188 each carry an N-linked (GlcNAc...) asparagine glycan. Cystine bridges form between C168/C186 and C172/C175. The tract at residues 196-262 (KTTEPSEEHN…KGQHRQGHLE (67 aa)) is disordered. Residues 243 to 258 (LHHHHHHHKHKGQHRQ) show a composition bias toward basic residues. U264 is a non-standard amino acid (selenocysteine). S269 is modified (phosphoserine). 4 non-standard amino acids (selenocysteine) are found at residues U282, U323, U335, and U357. The interval 357–385 (UHSQHVSPTEASPNUSUNNKTKKUKUNLN) is disordered. Residues 360–369 (QHVSPTEASP) are compositionally biased toward polar residues. T365 carries an O-linked (Hex...) threonine; partial glycan. 4 non-standard amino acids (selenocysteine) are found at residues U371, U373, U380, and U382. The segment covering 376–385 (KTKKUKUNLN) has biased composition (basic residues).

It belongs to the selenoprotein P family. Isoform Se-P1 contains several disulfide bridges and a selenide-sulfide bond between Sec-59 and Cys-62. These bonds are speculated to serve as redox-active pairs. In terms of processing, phosphorylation sites are present in the extracellular medium. As to expression, widely expressed, mainly by the liver. Secreted in plasma.

It is found in the secreted. Its function is as follows. Might be responsible for some of the extracellular antioxidant defense properties of selenium or might be involved in the transport of selenium. May supply selenium to tissues such as brain and testis. In Rattus norvegicus (Rat), this protein is Selenoprotein P.